The chain runs to 562 residues: Dihydroxy-acid dehydratase (562 aa).

Asp78 contacts Mg(2+). Cys119 provides a ligand contact to [2Fe-2S] cluster. Asp120 and Lys121 together coordinate Mg(2+). The residue at position 121 (Lys121) is an N6-carboxylysine. Cys192 is a [2Fe-2S] cluster binding site. Glu449 lines the Mg(2+) pocket. The active-site Proton acceptor is Ser475.

Belongs to the IlvD/Edd family. In terms of assembly, homodimer. The cofactor is [2Fe-2S] cluster. It depends on Mg(2+) as a cofactor.

It carries out the reaction (2R)-2,3-dihydroxy-3-methylbutanoate = 3-methyl-2-oxobutanoate + H2O. The catalysed reaction is (2R,3R)-2,3-dihydroxy-3-methylpentanoate = (S)-3-methyl-2-oxopentanoate + H2O. It functions in the pathway amino-acid biosynthesis; L-isoleucine biosynthesis; L-isoleucine from 2-oxobutanoate: step 3/4. It participates in amino-acid biosynthesis; L-valine biosynthesis; L-valine from pyruvate: step 3/4. Functionally, functions in the biosynthesis of branched-chain amino acids. Catalyzes the dehydration of (2R,3R)-2,3-dihydroxy-3-methylpentanoate (2,3-dihydroxy-3-methylvalerate) into 2-oxo-3-methylpentanoate (2-oxo-3-methylvalerate) and of (2R)-2,3-dihydroxy-3-methylbutanoate (2,3-dihydroxyisovalerate) into 2-oxo-3-methylbutanoate (2-oxoisovalerate), the penultimate precursor to L-isoleucine and L-valine, respectively. This is Dihydroxy-acid dehydratase from Aliarcobacter butzleri (strain RM4018) (Arcobacter butzleri).